The following is a 434-amino-acid chain: UDP-N-acetylglucosamine 1-carboxyvinyltransferase (434 aa).

Residue 22–23 (KN) coordinates phosphoenolpyruvate. Residue arginine 99 participates in UDP-N-acetyl-alpha-D-glucosamine binding. Cysteine 123 serves as the catalytic Proton donor. A 2-(S-cysteinyl)pyruvic acid O-phosphothioketal modification is found at cysteine 123. UDP-N-acetyl-alpha-D-glucosamine-binding positions include 128-132 (RPVDQ), aspartate 317, and isoleucine 339.

It belongs to the EPSP synthase family. MurA subfamily.

The protein localises to the cytoplasm. It carries out the reaction phosphoenolpyruvate + UDP-N-acetyl-alpha-D-glucosamine = UDP-N-acetyl-3-O-(1-carboxyvinyl)-alpha-D-glucosamine + phosphate. It participates in cell wall biogenesis; peptidoglycan biosynthesis. Functionally, cell wall formation. Adds enolpyruvyl to UDP-N-acetylglucosamine. This is UDP-N-acetylglucosamine 1-carboxyvinyltransferase from Paracidovorax citrulli (strain AAC00-1) (Acidovorax citrulli).